Here is an 89-residue protein sequence, read N- to C-terminus: Small ribosomal subunit protein uS14A (89 aa).

It belongs to the universal ribosomal protein uS14 family. In terms of assembly, part of the 30S ribosomal subunit. Contacts proteins S3 and S10.

Binds 16S rRNA, required for the assembly of 30S particles and may also be responsible for determining the conformation of the 16S rRNA at the A site. The polypeptide is Small ribosomal subunit protein uS14A (Staphylococcus haemolyticus (strain JCSC1435)).